A 607-amino-acid chain; its full sequence is Kelch repeat and BTB domain-containing protein 3 (607 aa).

The BTB domain occupies Tyr48–Asp115. Residues Cys150–Tyr250 form the BACK domain. Kelch repeat units follow at residues Lys291 to Gly337, Lys339 to Thr390, Arg400 to Asn450, Ile452 to Pro502, and Lys548 to Phe595.

This Mus musculus (Mouse) protein is Kelch repeat and BTB domain-containing protein 3.